Reading from the N-terminus, the 412-residue chain is Alanyl-tRNA editing protein Aarsd1-A (412 aa).

Zn(2+)-binding residues include histidine 108, histidine 112, cysteine 208, and histidine 212.

This sequence belongs to the class-II aminoacyl-tRNA synthetase family. Alax-L subfamily. Zn(2+) is required as a cofactor.

It localises to the cytoplasm. Functionally, functions in trans to edit the amino acid moiety from incorrectly charged tRNA(Ala). The polypeptide is Alanyl-tRNA editing protein Aarsd1-A (aarsd1-a) (Xenopus laevis (African clawed frog)).